Here is a 443-residue protein sequence, read N- to C-terminus: Minovincinine 19-hydroxy-O-acetyltransferase (443 aa).

Residue His157 is the Proton acceptor of the active site. Residues 215-222 carry the Nuclear localization signal motif; it reads RKRFLFSP. The stretch at 316–343 forms a coiled coil; sequence TKLVIGELRKAKDKLKNLSQEKLNYVAR. The active-site Proton acceptor is Asp384.

Belongs to the plant acyltransferase family. In terms of assembly, monomer. As to expression, expressed in cortical cells of the root tip, especially in hairy roots, as well as in etiolated seedlings. Mostly expressed in roots, and, at lower levels, in leaves.

It localises to the cytoplasm. It is found in the nucleus. The catalysed reaction is (+)-minovincinine + acetyl-CoA = (+)-echitovenine + CoA. The protein operates within alkaloid biosynthesis. Functionally, component of the monoterpenoid indole alkaloids (MIAs, e.g. echitovenine, tabersonine, lochnericine, 19-hydroxytabersonine and horhammericine) biosynthetic pathway; MIAs are used in cancer treatment and other medical applications. Acyltransferase catalyzing the conversion of (+)-minovincinine to (+)-echitovenine. The polypeptide is Minovincinine 19-hydroxy-O-acetyltransferase (Catharanthus roseus (Madagascar periwinkle)).